The following is a 127-amino-acid chain: Large ribosomal subunit protein bL17 (127 aa).

This sequence belongs to the bacterial ribosomal protein bL17 family. In terms of assembly, part of the 50S ribosomal subunit. Contacts protein L32.

The chain is Large ribosomal subunit protein bL17 from Xanthomonas campestris pv. campestris (strain 8004).